We begin with the raw amino-acid sequence, 301 residues long: TLR adapter interacting with SLC15A4 on the lysosome (301 aa).

The pLxIS motif signature appears at 290–294 (SLHIS). S294 bears the Phosphoserine mark.

Interacts (via pLxIS motif) with IRF5; leading to IRF5 activation. Interacts with SLC15A4; leading to its recruitment to endolysosome. Post-translationally, the phosphorylated pLxIS motif constitutes an IRF5-binding motif, leading to recruitment of the transcription factor IRF5 to induce type-I interferons and other cytokines. As to expression, highly expressed in immune cell types such as B-cells, neutrophils, dendritic cells and monocytes, the expression levels are two-three-fold higher in female cells compared to male cells (at protein level). Expressed at low levels in T-cells and NK cells.

The protein resides in the lysosome membrane. Its subcellular location is the endosome membrane. It is found in the nucleus. It localises to the cytoplasm. Innate immune adapter that mediates the recruitment and activation of IRF5 downstream of endolysosomal toll-like receptors TLR7, TLR8 and TLR9. Following recruitment to endolysosome by SLC15A4 downstream of TLR7, TLR8 and TLR9, specifically recruits IRF5 transcription factor via its pLxIS motif, leading to IRF5 activation and subsequent expression of type I interferons. Plays a role in the regulation of endolysosomal pH in immune cells such as B-cells, dendritic cells and monocytes. The sequence is that of TLR adapter interacting with SLC15A4 on the lysosome from Homo sapiens (Human).